Here is a 268-residue protein sequence, read N- to C-terminus: MKRVALLVQYDGSHYSGWQKQKNANTIQEILDKALLKITNHTVKTFAAGRTDAGVHASGQVIHFDIDCVIPGNSYSDVLNSLLPSTIRILESVEVKDSWHACYSASYRHYRYVINNSKFPNLFINNWSWHRYQKVLDEVLMLNASKKMEGEHDFFAFQKSGSNRQNSITKIKNIDVKRVEDLILVDIKATGFLYGMVRLIVGQLVLVGEKKISPEIFTDRWVNKKKNDVKESAPAKGLCFVNAVYEENVFKKIKNNDFFPIFLIEGFS.

Asp52 functions as the Nucleophile in the catalytic mechanism. Tyr110 serves as a coordination point for substrate.

The protein belongs to the tRNA pseudouridine synthase TruA family. As to quaternary structure, homodimer.

The enzyme catalyses uridine(38/39/40) in tRNA = pseudouridine(38/39/40) in tRNA. Formation of pseudouridine at positions 38, 39 and 40 in the anticodon stem and loop of transfer RNAs. This Prochlorococcus marinus (strain AS9601) protein is tRNA pseudouridine synthase A.